The primary structure comprises 422 residues: Phosphoglycerate kinase (422 aa).

Residues 24-26 (DLN), 64-67 (HLGR), Arg129, and Arg171 contribute to the substrate site. ATP contacts are provided by residues Lys222, Gly309, Glu340, and 370 to 373 (DIDT).

Belongs to the phosphoglycerate kinase family. In terms of assembly, monomer.

It localises to the cytoplasm. The catalysed reaction is (2R)-3-phosphoglycerate + ATP = (2R)-3-phospho-glyceroyl phosphate + ADP. It functions in the pathway carbohydrate degradation; glycolysis; pyruvate from D-glyceraldehyde 3-phosphate: step 2/5. The protein is Phosphoglycerate kinase (pgk) of Ureaplasma parvum serovar 3 (strain ATCC 700970).